A 256-amino-acid polypeptide reads, in one-letter code: Thiazole synthase (256 aa).

The active-site Schiff-base intermediate with DXP is Lys96. Residues Gly157, 183 to 184, and 205 to 206 contribute to the 1-deoxy-D-xylulose 5-phosphate site; these read AG and NT.

The protein belongs to the ThiG family. Homotetramer. Forms heterodimers with either ThiH or ThiS.

The protein resides in the cytoplasm. The catalysed reaction is [ThiS sulfur-carrier protein]-C-terminal-Gly-aminoethanethioate + 2-iminoacetate + 1-deoxy-D-xylulose 5-phosphate = [ThiS sulfur-carrier protein]-C-terminal Gly-Gly + 2-[(2R,5Z)-2-carboxy-4-methylthiazol-5(2H)-ylidene]ethyl phosphate + 2 H2O + H(+). Its pathway is cofactor biosynthesis; thiamine diphosphate biosynthesis. In terms of biological role, catalyzes the rearrangement of 1-deoxy-D-xylulose 5-phosphate (DXP) to produce the thiazole phosphate moiety of thiamine. Sulfur is provided by the thiocarboxylate moiety of the carrier protein ThiS. In vitro, sulfur can be provided by H(2)S. The polypeptide is Thiazole synthase (Bacillus cereus (strain ATCC 10987 / NRS 248)).